Reading from the N-terminus, the 230-residue chain is DNA mismatch repair protein MutH (230 aa).

This sequence belongs to the MutH family.

Its subcellular location is the cytoplasm. Its function is as follows. Sequence-specific endonuclease that cleaves unmethylated GATC sequences. It is involved in DNA mismatch repair. In Enterobacter sp. (strain 638), this protein is DNA mismatch repair protein MutH.